A 206-amino-acid polypeptide reads, in one-letter code: Small ribosomal subunit protein uS4 (206 aa).

The tract at residues 23–47 is disordered; that stretch reads AKSPLNRREYGPGQHGQRRKGKLSD. In terms of domain architecture, S4 RNA-binding spans 94–157; that stretch reads RRLDAVIYRA…RQLAIVLESV (64 aa).

It belongs to the universal ribosomal protein uS4 family. Part of the 30S ribosomal subunit. Contacts protein S5. The interaction surface between S4 and S5 is involved in control of translational fidelity.

In terms of biological role, one of the primary rRNA binding proteins, it binds directly to 16S rRNA where it nucleates assembly of the body of the 30S subunit. Functionally, with S5 and S12 plays an important role in translational accuracy. This chain is Small ribosomal subunit protein uS4, found in Paracoccus denitrificans (strain Pd 1222).